Consider the following 427-residue polypeptide: Indole diterpene prenyltransferase idtF (427 aa).

Residues R97, K195, R264, K266, Y268, and Y352 each coordinate substrate.

The protein belongs to the tryptophan dimethylallyltransferase family.

It functions in the pathway secondary metabolite biosynthesis. Its function is as follows. Indole diterpene prenyltransferase; part of the gene cluster that mediates the biosynthesis of paspalitrems, indole-diterpene (IDT) mycotoxins that are potent tremorgens in mammals. The geranylgeranyl diphosphate (GGPP) synthase idtG is proposed to catalyze the first step in IDT biosynthesis via catalysis of a series of iterative condensations of isopentenyl diphosphate (IPP) with dimethylallyl diphosphate (DMAPP), geranyl diphosphate (GPP), and farnesyl diphosphate (FPP), to form GGPP. Condensation of indole-3-glycerol phosphate with GGPP by the prenyltransferase idtC then forms 3-geranylgeranylindole (3-GGI). Epoxidation of the two terminal alkenes of the geranylgeranyl moiety by the FAD-dependent monooxygenase idtM, and cyclization by the terpene cyclase idtB then leads to the production of paspaline. The cytochrome P450 monooxygenase idtP then catalyzes oxidative elimination of the pendant methyl group at C-12 of paspaline and generates the C-10 ketone to yield 13-desoxypaxilline. The cytochrome P450 monooxygenase idtQ may catalyze the C-13 oxidation of 13-desoxypaxilline to afford paxilline. Considering that both paspalicine and paxilline were detected in C.paspali, idtQ also catalyzes the formation of paspalinine from 13-desoxypaxilline via paspalicine as an intermediate. Finally, the alpha-prenyltransferase idtF prenylates paspalinine at the C-20 or the C-21 positions to yield paspalitrems A and C, respectively. The hydroxylation of paspalitrem A at C-32 by a still unknown oxidase affords paspalitrem B. In Claviceps paspali (Rye ergot fungus), this protein is Indole diterpene prenyltransferase idtF.